The following is a 278-amino-acid chain: Putative phosphoenolpyruvate synthase regulatory protein (278 aa).

Residue 157-164 (GVSRSGKT) participates in ADP binding.

It belongs to the pyruvate, phosphate/water dikinase regulatory protein family. PSRP subfamily.

The catalysed reaction is [pyruvate, water dikinase] + ADP = [pyruvate, water dikinase]-phosphate + AMP + H(+). It catalyses the reaction [pyruvate, water dikinase]-phosphate + phosphate + H(+) = [pyruvate, water dikinase] + diphosphate. Functionally, bifunctional serine/threonine kinase and phosphorylase involved in the regulation of the phosphoenolpyruvate synthase (PEPS) by catalyzing its phosphorylation/dephosphorylation. This Vibrio parahaemolyticus serotype O3:K6 (strain RIMD 2210633) protein is Putative phosphoenolpyruvate synthase regulatory protein.